A 538-amino-acid polypeptide reads, in one-letter code: Carboxypeptidase 2 (538 aa).

A signal peptide spans 1-21; it reads MVAYRFLTLISLGLGSHCVSA. N-linked (GlcNAc...) asparagine glycosylation is present at N46. The segment at 53–76 is disordered; it reads PAFTSPGTVSRGFSDGTSGPTRDE. The Peptidase M14 domain maps to 71-351; sequence GPTRDETMEG…VMAKSVLQTA (281 aa). The Zn(2+) site is built by H136, E139, and H224. The active-site Proton donor/acceptor is E322. Residues N393 and N459 are each glycosylated (N-linked (GlcNAc...) asparagine).

It belongs to the peptidase M14 family. It depends on Zn(2+) as a cofactor.

It is found in the secreted. In terms of biological role, extracellular metalloprotease that contributes to pathogenicity. This chain is Carboxypeptidase 2 (MCPB), found in Trichophyton rubrum (Athlete's foot fungus).